A 312-amino-acid chain; its full sequence is tRNA uridine(34) hydroxylase (312 aa).

The 96-residue stretch at 130-225 (RGDEVVFFDG…YGEKFGNQGL (96 aa)) folds into the Rhodanese domain. Catalysis depends on C185, which acts as the Cysteine persulfide intermediate.

The protein belongs to the TrhO family.

It carries out the reaction uridine(34) in tRNA + AH2 + O2 = 5-hydroxyuridine(34) in tRNA + A + H2O. Functionally, catalyzes oxygen-dependent 5-hydroxyuridine (ho5U) modification at position 34 in tRNAs. In Corynebacterium efficiens (strain DSM 44549 / YS-314 / AJ 12310 / JCM 11189 / NBRC 100395), this protein is tRNA uridine(34) hydroxylase.